The following is a 116-amino-acid chain: Large ribosomal subunit protein bL19 (116 aa).

The protein belongs to the bacterial ribosomal protein bL19 family.

This protein is located at the 30S-50S ribosomal subunit interface and may play a role in the structure and function of the aminoacyl-tRNA binding site. This chain is Large ribosomal subunit protein bL19, found in Flavobacterium psychrophilum (strain ATCC 49511 / DSM 21280 / CIP 103535 / JIP02/86).